The chain runs to 247 residues: 2,3-bisphosphoglycerate-dependent phosphoglycerate mutase (247 aa).

Substrate contacts are provided by residues 8–15, 21–22, Arg60, 87–90, Lys98, 114–115, and 183–184; these read RHGESQWN, TG, ERHY, RR, and GN. His9 (tele-phosphohistidine intermediate) is an active-site residue. Glu87 serves as the catalytic Proton donor/acceptor.

Belongs to the phosphoglycerate mutase family. BPG-dependent PGAM subfamily.

It carries out the reaction (2R)-2-phosphoglycerate = (2R)-3-phosphoglycerate. It functions in the pathway carbohydrate degradation; glycolysis; pyruvate from D-glyceraldehyde 3-phosphate: step 3/5. Catalyzes the interconversion of 2-phosphoglycerate and 3-phosphoglycerate. The sequence is that of 2,3-bisphosphoglycerate-dependent phosphoglycerate mutase from Chlorobium chlorochromatii (strain CaD3).